The following is a 597-amino-acid chain: Arginine--tRNA ligase (597 aa).

The 'HIGH' region motif lies at Pro125–His135.

The protein belongs to the class-I aminoacyl-tRNA synthetase family. In terms of assembly, monomer.

The protein localises to the cytoplasm. It catalyses the reaction tRNA(Arg) + L-arginine + ATP = L-arginyl-tRNA(Arg) + AMP + diphosphate. The polypeptide is Arginine--tRNA ligase (Bacteroides fragilis (strain ATCC 25285 / DSM 2151 / CCUG 4856 / JCM 11019 / LMG 10263 / NCTC 9343 / Onslow / VPI 2553 / EN-2)).